We begin with the raw amino-acid sequence, 424 residues long: UDP-N-acetylglucosamine 1-carboxyvinyltransferase 3 (424 aa).

Position 22-23 (22-23 (KN)) interacts with phosphoenolpyruvate. Position 94 (arginine 94) interacts with UDP-N-acetyl-alpha-D-glucosamine. Aspartate 118 serves as the catalytic Proton donor. UDP-N-acetyl-alpha-D-glucosamine contacts are provided by residues 123 to 127 (RPVDQ), aspartate 306, and leucine 328.

Belongs to the EPSP synthase family. MurA subfamily.

The protein resides in the cytoplasm. It catalyses the reaction phosphoenolpyruvate + UDP-N-acetyl-alpha-D-glucosamine = UDP-N-acetyl-3-O-(1-carboxyvinyl)-alpha-D-glucosamine + phosphate. The protein operates within cell wall biogenesis; peptidoglycan biosynthesis. In terms of biological role, cell wall formation. Adds enolpyruvyl to UDP-N-acetylglucosamine. The protein is UDP-N-acetylglucosamine 1-carboxyvinyltransferase 3 of Symbiobacterium thermophilum (strain DSM 24528 / JCM 14929 / IAM 14863 / T).